Here is a 508-residue protein sequence, read N- to C-terminus: Maturase K (508 aa).

This sequence belongs to the intron maturase 2 family. MatK subfamily.

Its subcellular location is the plastid. It is found in the chloroplast. Its function is as follows. Usually encoded in the trnK tRNA gene intron. Probably assists in splicing its own and other chloroplast group II introns. The polypeptide is Maturase K (Ranunculus glacialis (Glacier buttercup)).